A 209-amino-acid chain; its full sequence is Uracil phosphoribosyltransferase (209 aa).

Residues R79, R104, and 131–139 (DPMLATGGS) contribute to the 5-phospho-alpha-D-ribose 1-diphosphate site. Uracil is bound by residues I194 and 199-201 (GDA). D200 is a binding site for 5-phospho-alpha-D-ribose 1-diphosphate.

This sequence belongs to the UPRTase family. Requires Mg(2+) as cofactor.

It carries out the reaction UMP + diphosphate = 5-phospho-alpha-D-ribose 1-diphosphate + uracil. It participates in pyrimidine metabolism; UMP biosynthesis via salvage pathway; UMP from uracil: step 1/1. Allosterically activated by GTP. Its function is as follows. Catalyzes the conversion of uracil and 5-phospho-alpha-D-ribose 1-diphosphate (PRPP) to UMP and diphosphate. In Ligilactobacillus salivarius (strain UCC118) (Lactobacillus salivarius), this protein is Uracil phosphoribosyltransferase.